The following is a 366-amino-acid chain: tRNA(Met) cytidine acetate ligase (366 aa).

ATP is bound by residues 7–20, G96, N152, and R175; that span reads IAEFNPFHYGHQYL.

Belongs to the TmcAL family.

It is found in the cytoplasm. The catalysed reaction is cytidine(34) in elongator tRNA(Met) + acetate + ATP = N(4)-acetylcytidine(34) in elongator tRNA(Met) + AMP + diphosphate. Its function is as follows. Catalyzes the formation of N(4)-acetylcytidine (ac(4)C) at the wobble position of elongator tRNA(Met), using acetate and ATP as substrates. First activates an acetate ion to form acetyladenylate (Ac-AMP) and then transfers the acetyl group to tRNA to form ac(4)C34. The chain is tRNA(Met) cytidine acetate ligase from Streptococcus equi subsp. zooepidemicus (strain H70).